Consider the following 226-residue polypeptide: MSQAPIELKGSSFTLSVVHLHNSQPEVIRPALIAKVGQAPAFLKNAPVVINITDVNGSVEWHEMLRMFSAAGLHVIGVSGCRDETQKQAVLHAGLPLLSEGKGAVKKAPVAPATPVAAKTKIISTPVRSGQQIYARSGDLIVTSHVSAGAELIADGNIHVYGIMRGRALAGAAGDSGSQIFCSHLSAELVSIAGQYWLSDQIPENYYGQAAHLTLSSGALTIQSLF.

The protein belongs to the MinC family. In terms of assembly, interacts with MinD and FtsZ.

Its function is as follows. Cell division inhibitor that blocks the formation of polar Z ring septums. Rapidly oscillates between the poles of the cell to destabilize FtsZ filaments that have formed before they mature into polar Z rings. Prevents FtsZ polymerization. This chain is Probable septum site-determining protein MinC, found in Edwardsiella ictaluri (strain 93-146).